The sequence spans 106 residues: ATP-dependent Clp protease adapter protein ClpS (106 aa).

It belongs to the ClpS family. Binds to the N-terminal domain of the chaperone ClpA.

In terms of biological role, involved in the modulation of the specificity of the ClpAP-mediated ATP-dependent protein degradation. The chain is ATP-dependent Clp protease adapter protein ClpS from Pseudoalteromonas atlantica (strain T6c / ATCC BAA-1087).